We begin with the raw amino-acid sequence, 53 residues long: UPF0391 membrane protein ETA_06630 (53 aa).

A run of 2 helical transmembrane segments spans residues 4-24 (WGII…GGLA) and 27-47 (AAWA…ISLF).

The protein belongs to the UPF0391 family.

It localises to the cell membrane. This chain is UPF0391 membrane protein ETA_06630, found in Erwinia tasmaniensis (strain DSM 17950 / CFBP 7177 / CIP 109463 / NCPPB 4357 / Et1/99).